A 475-amino-acid polypeptide reads, in one-letter code: Glucose-6-phosphate 1-dehydrogenase gcd1 (475 aa).

Positions 42 and 146 each coordinate NADP(+). D-glucose 6-phosphate is bound by residues lysine 146, glutamate 214, and aspartate 233. Histidine 238 (proton acceptor) is an active-site residue. Residue lysine 332 participates in D-glucose 6-phosphate binding. 2 residues coordinate NADP(+): arginine 342 and arginine 365.

It belongs to the glucose-6-phosphate dehydrogenase family.

It is found in the cytoplasm. The enzyme catalyses D-glucose 6-phosphate + NADP(+) = 6-phospho-D-glucono-1,5-lactone + NADPH + H(+). It participates in carbohydrate degradation; pentose phosphate pathway; D-ribulose 5-phosphate from D-glucose 6-phosphate (oxidative stage): step 1/3. In terms of biological role, catalyzes the rate-limiting step of the oxidative pentose-phosphate pathway, which represents a route for the dissimilation of carbohydrates besides glycolysis. The main function of this enzyme is to provide reducing power (NADPH) and pentose phosphates for fatty acid and nucleic acid synthesis. The protein is Glucose-6-phosphate 1-dehydrogenase gcd1 of Schizosaccharomyces pombe (strain 972 / ATCC 24843) (Fission yeast).